A 152-amino-acid polypeptide reads, in one-letter code: Transcriptional regulator MraZ (152 aa).

SpoVT-AbrB domains lie at 5–52 and 81–124; these read ATLV…TLPE and ASEC…DEQV.

It belongs to the MraZ family. Forms oligomers.

The protein localises to the cytoplasm. The protein resides in the nucleoid. In terms of biological role, negatively regulates its own expression and that of the subsequent genes in the proximal part of the division and cell wall (dcw) gene cluster. Acts by binding directly to DNA. May also regulate the expression of genes outside the dcw cluster. This Proteus mirabilis (strain HI4320) protein is Transcriptional regulator MraZ.